Reading from the N-terminus, the 661-residue chain is MRLKNLTFIIILIISGELYAEEKPCGFPHVENGRIAQYYYTFKSFYFPMSIDKKLSFFCLAGYTTESGRQEEQTTCTTEGWSPEPRCFKKCTKPDLSNGYISDVKLLYKIQENMRYGCASGYKTTGGKDEEVVQCLSDGWSSQPTCRKEHETCLAPELYNGNYSTTQKTFKVKDKVQYECATGYYTAGGKKTEEVECLTYGWSLTPKCTKLKCSSLRLIENGYFHPVKQTYEEGDVVQFFCHENYYLSGSDLIQCYNFGWYPESPVCEGRRNRCPPPPLPINSKIQTHSTTYRHGEIVHIECELNFEIHGSAEIRCEDGKWTEPPKCIEGQEKVACEEPPFIENGAANLHSKIYYNGDKVTYACKSGYLLHGSNEITCNRGKWTLPPECVENNENCKHPPVVMNGAVADGILASYATGSSVEYRCNEYYLLRGSKISRCEQGKWSSPPVCLEPCTVNVDYMNRNNIEMKWKYEGKVLHGDLIDFVCKQGYDLSPLTPLSELSVQCNRGEVKYPLCTRKESKGMCTSPPLIKHGVIISSTVDTYENGSSVEYRCFDHHFLEGSREAYCLDGMWTTPPLCLEPCTLSFTEMEKNNLLLKWDFDNRPHILHGEYIEFICRGDTYPAELYITGSILRMQCDRGQLKYPRCIPRQSTLSYQEPLRT.

The first 20 residues, methionine 1–alanine 20, serve as a signal peptide directing secretion. 10 Sushi domains span residues proline 24–phenylalanine 88, lysine 89–lysine 148, glutamate 151–lysine 210, leucine 211–glycine 269, asparagine 272–glutamate 329, valine 334–glutamate 391, glutamate 394–glutamate 452, proline 453–threonine 516, glycine 522–glutamate 580, and proline 581–isoleucine 647. Disulfide bonds link cysteine 25/cysteine 76, cysteine 59/cysteine 87, cysteine 91/cysteine 135, cysteine 118/cysteine 146, cysteine 153/cysteine 197, cysteine 180/cysteine 208, cysteine 213/cysteine 255, cysteine 241/cysteine 267, cysteine 274/cysteine 316, cysteine 302/cysteine 327, cysteine 336/cysteine 378, cysteine 364/cysteine 389, cysteine 396/cysteine 439, cysteine 425/cysteine 450, cysteine 454/cysteine 505, cysteine 486/cysteine 515, cysteine 524/cysteine 567, cysteine 553/cysteine 578, cysteine 582/cysteine 636, and cysteine 616/cysteine 646. Asparagine 162 carries N-linked (GlcNAc...) asparagine glycosylation. A glycan (N-linked (GlcNAc...) asparagine) is linked at asparagine 545. The short motif at arginine 617–aspartate 619 is the Cell attachment site element.

As to quaternary structure, tetramer of two A chains (F13A1) and two B (F13B) chains.

Its subcellular location is the secreted. Its function is as follows. The B chain of factor XIII is not catalytically active, but is thought to stabilize the A subunits and regulate the rate of transglutaminase formation by thrombin. The protein is Coagulation factor XIII B chain (F13B) of Homo sapiens (Human).